A 144-amino-acid chain; its full sequence is MIGLIQRVKSANVRVEQQIVGQIEQGLLVLLGVKQGDDQSKADKLLQKVLNYRVFADQQGKMNLNVQQAGGSLLIVSQFTLAADTQKGLRPSFSRGASPADAKALYDYFHQQAALHIHTETGQFAADMQVSLQNDGPVTFWLQV.

The Gly-cisPro motif, important for rejection of L-amino acids motif lies at 136–137 (GP).

This sequence belongs to the DTD family. Homodimer.

Its subcellular location is the cytoplasm. It catalyses the reaction glycyl-tRNA(Ala) + H2O = tRNA(Ala) + glycine + H(+). It carries out the reaction a D-aminoacyl-tRNA + H2O = a tRNA + a D-alpha-amino acid + H(+). An aminoacyl-tRNA editing enzyme that deacylates mischarged D-aminoacyl-tRNAs. Also deacylates mischarged glycyl-tRNA(Ala), protecting cells against glycine mischarging by AlaRS. Acts via tRNA-based rather than protein-based catalysis; rejects L-amino acids rather than detecting D-amino acids in the active site. By recycling D-aminoacyl-tRNA to D-amino acids and free tRNA molecules, this enzyme counteracts the toxicity associated with the formation of D-aminoacyl-tRNA entities in vivo and helps enforce protein L-homochirality. The sequence is that of D-aminoacyl-tRNA deacylase from Haemophilus ducreyi (strain 35000HP / ATCC 700724).